A 245-amino-acid chain; its full sequence is tRNA pseudouridine synthase A (245 aa).

Residue aspartate 52 is the Nucleophile of the active site. Tyrosine 110 provides a ligand contact to substrate.

This sequence belongs to the tRNA pseudouridine synthase TruA family. As to quaternary structure, homodimer.

The enzyme catalyses uridine(38/39/40) in tRNA = pseudouridine(38/39/40) in tRNA. Formation of pseudouridine at positions 38, 39 and 40 in the anticodon stem and loop of transfer RNAs. The polypeptide is tRNA pseudouridine synthase A (Pseudothermotoga lettingae (strain ATCC BAA-301 / DSM 14385 / NBRC 107922 / TMO) (Thermotoga lettingae)).